Reading from the N-terminus, the 1021-residue chain is Sodium/potassium-transporting ATPase subunit alpha-1 (1021 aa).

The propeptide occupies 1–5; sequence MGKGV. Residues 1 to 11 show a composition bias toward basic and acidic residues; that stretch reads MGKGVGRDKYE. Residues 1 to 37 are disordered; the sequence is MGKGVGRDKYEPAAVSEHGDKKKAKKERDMDELKKEV. At 6–85 the chain is on the cytoplasmic side; sequence GRDKYEPAAV…NALTPPPTTP (80 aa). Lys-9 carries the post-translational modification N6-acetyllysine. Position 10 is a phosphotyrosine (Tyr-10). Ser-16 carries the post-translational modification Phosphoserine; by PKC. Position 21 is an N6-acetyllysine (Lys-21). Positions 26–37 are enriched in basic and acidic residues; the sequence is KERDMDELKKEV. A phosphoserine mark is found at Ser-38 and Ser-45. Residues 80 to 82 form a phosphoinositide-3 kinase binding region; sequence PPP. Residues 86-106 traverse the membrane as a helical segment; the sequence is EWVKFCRQLFGGFSMLLWIGA. At 107–129 the chain is on the extracellular side; sequence ILCFLAYGIQAATEEEPQNDNLY. The chain crosses the membrane as a helical span at residues 130–150; the sequence is LGVVLSAVVIITGCFSYYQEA. Residues 151 to 286 are Cytoplasmic-facing; sequence KSSKIMESFK…GGQTPIAAEI (136 aa). Positions 214-233 are disordered; sequence SSLTGESEPQTRSPDFTNEN. Phosphoserine is present on Ser-226. Residue Tyr-258 is modified to Phosphotyrosine. A helical membrane pass occupies residues 287-306; it reads EHFIHIITGVAVFLGVSFFI. Topologically, residues 307 to 318 are extracellular; sequence LSLILEYTWLEA. Residues 319 to 336 traverse the membrane as a helical segment; it reads VIFLIGIIVANVPEGLLA. Residues 337–770 are Cytoplasmic-facing; that stretch reads TVTVCLTLTA…EEGRLIFDNL (434 aa). Residue Asp-374 is the 4-aspartylphosphate intermediate of the active site. 2 positions are modified to phosphoserine: Ser-450 and Ser-482. Lys-485 is a binding site for ATP. Position 540 is a phosphotyrosine (Tyr-540). Residues 594-715 are mediates interaction with SCN7A; sequence RAAVPDAVGK…QGAIVAVTGD (122 aa). An N6-succinyllysine modification is found at Lys-659. Phosphoserine is present on residues Ser-666 and Ser-673. Residues Asp-715 and Asp-719 each coordinate Mg(2+). The chain crosses the membrane as a helical span at residues 771-790; sequence KKSIAYTLTSNIPEITPFLI. Topologically, residues 791–800 are extracellular; sequence FIIANIPLPL. The chain crosses the membrane as a helical span at residues 801–821; it reads GTVTILCIDLGTDMVPAISLA. The Cytoplasmic portion of the chain corresponds to 822–841; that stretch reads YEQAESDIMKRQPRNPKTDK. The helical transmembrane segment at 842–864 threads the bilayer; the sequence is LVNEQLISMAYGQIGMIQALGGF. Residues 865-916 lie on the Extracellular side of the membrane; that stretch reads FTYFVILAENGFLPIHLLGLRVNWDDRWINDVEDSYGQQWTYEQRKIVEFTC. A helical transmembrane segment spans residues 917–936; that stretch reads HTPFFVTIVVVQWADLVICK. At 937-949 the chain is on the cytoplasmic side; the sequence is TRRNSVFQQGMKN. The residue at position 941 (Ser-941) is a Phosphoserine; by PKA. Residues 950–968 form a helical membrane-spanning segment; that stretch reads KILIFGLFEETALAAFLSY. Residues 969–983 are Extracellular-facing; it reads CPGMGVALRMYPLKP. A helical membrane pass occupies residues 984-1004; that stretch reads TWWFCAFPYSLLIFVYDEVRK. Residues 1005–1021 are Cytoplasmic-facing; the sequence is LIIRRRPGGWVEKETYY.

This sequence belongs to the cation transport ATPase (P-type) (TC 3.A.3) family. Type IIC subfamily. In terms of assembly, the sodium/potassium-transporting ATPase is composed of a catalytic alpha subunit, an auxiliary non-catalytic beta subunit and an additional regulatory subunit. Interacts with regulatory subunit FXYD1. Interacts with regulatory subunit FXYD3. Interacts with SIK1. Interacts with SLC35G1 and STIM1. Interacts with CLN3; this interaction regulates the sodium/potassium-transporting ATPase complex localization at the plasma membrane. Interacts with SCN7A; activates ATP1A1 P-type sodium:potassium-exchanging transporter activity which indirectly signals to nearby neurons to regulate sodium homeostasis. Post-translationally, phosphorylation on Tyr-10 modulates pumping activity. Phosphorylation of Ser-941 by PKA modulates the response of ATP1A1 to PKC. Dephosphorylation by protein phosphatase 2A (PP2A) following increases in intracellular sodium, leading to increase catalytic activity.

The protein resides in the cell membrane. It localises to the basolateral cell membrane. Its subcellular location is the sarcolemma. It is found in the cell projection. The protein localises to the axon. The protein resides in the melanosome. It catalyses the reaction K(+)(out) + Na(+)(in) + ATP + H2O = K(+)(in) + Na(+)(out) + ADP + phosphate + H(+). In terms of biological role, this is the catalytic component of the active enzyme, which catalyzes the hydrolysis of ATP coupled with the exchange of sodium and potassium ions across the plasma membrane. This action creates the electrochemical gradient of sodium and potassium ions, providing the energy for active transport of various nutrients. Could also be part of an osmosensory signaling pathway that senses body-fluid sodium levels and controls salt intake behavior as well as voluntary water intake to regulate sodium homeostasis. In Sus scrofa (Pig), this protein is Sodium/potassium-transporting ATPase subunit alpha-1 (ATP1A1).